Here is a 322-residue protein sequence, read N- to C-terminus: tRNA-dihydrouridine synthase B (322 aa).

Residues 16–18 (PMA) and glutamine 70 contribute to the FMN site. Catalysis depends on cysteine 100, which acts as the Proton donor. Residues lysine 139, 200-202 (NGD), and 224-225 (GR) contribute to the FMN site.

Belongs to the Dus family. DusB subfamily. It depends on FMN as a cofactor.

It catalyses the reaction a 5,6-dihydrouridine in tRNA + NAD(+) = a uridine in tRNA + NADH + H(+). It carries out the reaction a 5,6-dihydrouridine in tRNA + NADP(+) = a uridine in tRNA + NADPH + H(+). Its function is as follows. Catalyzes the synthesis of 5,6-dihydrouridine (D), a modified base found in the D-loop of most tRNAs, via the reduction of the C5-C6 double bond in target uridines. In Shewanella oneidensis (strain ATCC 700550 / JCM 31522 / CIP 106686 / LMG 19005 / NCIMB 14063 / MR-1), this protein is tRNA-dihydrouridine synthase B.